Here is a 282-residue protein sequence, read N- to C-terminus: 1-deoxy-11-beta-hydroxypentalenate dehydrogenase (282 aa).

12-36 (GAASGIGLALSARFARAGAGVVMAD) contributes to the NAD(+) binding site. Serine 144 is a binding site for substrate. Tyrosine 157 serves as the catalytic Proton acceptor. Lysine 161 is an NAD(+) binding site. The tract at residues 258–282 (PPPSPEEELWPVPKTTTATTATTKH) is disordered. Low complexity predominate over residues 267-282 (WPVPKTTTATTATTKH).

Belongs to the short-chain dehydrogenases/reductases (SDR) family.

It carries out the reaction 1-deoxy-11beta-hydroxypentalenate + NAD(+) = 1-deoxy-11-oxopentalenate + NADH + H(+). It functions in the pathway antibiotic biosynthesis; pentalenolactone biosynthesis. Functionally, catalyzes the oxidation of 1-deoxy-11-beta-hydroxypentalenic acid to 1-deoxy-11-oxopentalenic acid in the biosynthesis of pentalenolactone antibiotic. This chain is 1-deoxy-11-beta-hydroxypentalenate dehydrogenase (pntF), found in Streptomyces arenae.